A 295-amino-acid polypeptide reads, in one-letter code: Thioredoxin-related transmembrane protein 2 (295 aa).

A signal peptide spans 1–48; that stretch reads MAVLAPLIALVYSVPRLSRWLARPYCLLSALLSIAFLLVRKLPPICNG. The Extracellular portion of the chain corresponds to 49–102; sequence LPTQREDGNPCDFDWREVEILMFLSAIVMMKNRRSITVEQHVGNIFMFSKVANA. The helical transmembrane segment at 103 to 125 threads the bilayer; that stretch reads ILFFRLDIRMGLLYLTLCIVFLM. The region spanning 114–269 is the Thioredoxin domain; sequence LLYLTLCIVF…LYQRAKKLSK (156 aa). Topologically, residues 126 to 295 are cytoplasmic; that stretch reads TCKPPLYMGP…VPDGENKKDK (170 aa). Phosphoserine occurs at positions 211 and 243. The disordered stretch occupies residues 266–295; that stretch reads KLSKGGDMSEEKPGNPTPTAVPDGENKKDK. The short motif at 292-295 is the Di-lysine motif element; that stretch reads KKDK.

Monomer. Homodimer; disulfide-linked. Occurs in both reduced and oxidized monomeric form. Oxidative conditions increase homodimerization. Interacts with CANX. Interacts with ATP2A2.

Its subcellular location is the endoplasmic reticulum membrane. It is found in the mitochondrion membrane. Functionally, endoplasmic reticulum and mitochondria-associated protein that probably functions as a regulator of cellular redox state and thereby regulates protein post-translational modification, protein folding and mitochondrial activity. Indirectly regulates neuronal proliferation, migration, and organization in the developing brain. The protein is Thioredoxin-related transmembrane protein 2 (Tmx2) of Rattus norvegicus (Rat).